A 309-amino-acid chain; its full sequence is Taste receptor type 2 member 43 (309 aa).

Residue methionine 1 is a topological domain, extracellular. A helical transmembrane segment spans residues 2-22 (ITFLPIIFSSLVVVTFVIGNF). Residues 23–46 (ANGFIALVNSIEWFKRQKISFADQ) are Cytoplasmic-facing. The helical transmembrane segment at 47–67 (ILTALAVSRVGLLWVLLLNWY) threads the bilayer. The Extracellular portion of the chain corresponds to 68–86 (LTVLNPAFNSVEVRTTAYN). A helical membrane pass occupies residues 87-107 (IWAVINHFSNWLATSLSIFYL). Over 108 to 126 (LKIANFSNFIFLHLKRRVK) the chain is Cytoplasmic. A helical transmembrane segment spans residues 127–147 (SVILVMLLGPLLFLACHLFMI). Over 148–178 (NMNEIVRTKEFDGNMTWKIKLKSAMYFSNMT) the chain is Extracellular. 2 N-linked (GlcNAc...) asparagine glycosylation sites follow: asparagine 161 and asparagine 176. The chain crosses the membrane as a helical span at residues 179–199 (VTMVANLVPFTLTLLSFLLLI). Over 200–229 (CSLCKHLKKMQLHGKGSQDPSTKVHIKALQ) the chain is Cytoplasmic. A helical membrane pass occupies residues 230 to 250 (TVISFLLLCAIYFLSIMISVW). The Extracellular segment spans residues 251–259 (SFGSLENKP). A helical transmembrane segment spans residues 260–280 (VFMFCKAIRFSYPSIHPFILI). At 281–309 (WGNKKLKQTFLSVFWQMRYWVKGEKTSSP) the chain is on the cytoplasmic side.

The protein belongs to the G-protein coupled receptor T2R family.

The protein localises to the membrane. It localises to the cell projection. Its subcellular location is the cilium membrane. Functionally, gustducin-coupled receptor immplicated in the perception of bitter compounds in the oral cavity and the gastrointestinal tract. Signals through PLCB2 and the calcium-regulated cation channel TRPM5. Activated by the sulfonyl amide sweeteners saccharin and acesulfame K. In airway epithelial cells, binding of bitter compounds increases the intracellular calcium ion concentration and stimulates ciliary beat frequency. May act as chemosensory receptors in airway epithelial cells to detect and eliminate potential noxious agents from the airways. In Pan paniscus (Pygmy chimpanzee), this protein is Taste receptor type 2 member 43 (TAS2R43).